Consider the following 518-residue polypeptide: 4-trimethylaminobutyraldehyde dehydrogenase B (518 aa).

NAD(+) contacts are provided by residues Lys-204 and 256–260 (GSVPT). The active-site Proton acceptor is Glu-278. The Nucleophile role is filled by Cys-312. Glu-415 contributes to the NAD(+) binding site.

It belongs to the aldehyde dehydrogenase family. As to quaternary structure, homotetramer.

The protein localises to the cytoplasm. The protein resides in the cytosol. It carries out the reaction 4-(trimethylamino)butanal + NAD(+) + H2O = 4-(trimethylamino)butanoate + NADH + 2 H(+). The catalysed reaction is an aldehyde + NAD(+) + H2O = a carboxylate + NADH + 2 H(+). The protein operates within amine and polyamine biosynthesis; carnitine biosynthesis. Functionally, converts gamma-trimethylaminobutyraldehyde into gamma-butyrobetaine with high efficiency (in vitro). Can catalyze the irreversible oxidation of a broad range of aldehydes to the corresponding acids in an NAD-dependent reaction, but with low efficiency. This chain is 4-trimethylaminobutyraldehyde dehydrogenase B (aldh9a1b), found in Danio rerio (Zebrafish).